The chain runs to 202 residues: GPI-anchored hemophore cfmB (202 aa).

A signal peptide spans 1–18 (MHFSRTSLILFAAGLASA). Residues 19-108 (QLPNVPGCSL…STTASETATT (90 aa)) form the CFEM domain. Cystine bridges form between cysteine 26–cysteine 67, cysteine 30–cysteine 62, cysteine 40–cysteine 48, and cysteine 50–cysteine 83. Heme is bound at residue aspartate 45. Positions 94-171 (PVGAASTTAS…PSSQSTSASA (78 aa)) are disordered. Residues 97–171 (AASTTASETA…PSSQSTSASA (75 aa)) show a composition bias toward low complexity. Asparagine 180 is lipidated: GPI-anchor amidated asparagine. Residues 181 to 202 (AGSEKANVAGVVAVAAAALYLL) constitute a propeptide, removed in mature form.

Belongs to the RBT5 family. Post-translationally, the GPI-anchor is attached to the protein in the endoplasmic reticulum and serves to target the protein to the cell surface. There, the glucosamine-inositol phospholipid moiety is cleaved off and the GPI-modified mannoprotein is covalently attached via its lipidless GPI glycan remnant to the 1,6-beta-glucan of the outer cell wall layer.

It is found in the secreted. The protein localises to the cell wall. It localises to the cell membrane. Functionally, GPI-anchored cell wall protein involved in stabilizing the cell wall. Not implicated in virulence, heme uptake and biofilm formation. This chain is GPI-anchored hemophore cfmB, found in Aspergillus fumigatus (strain ATCC MYA-4609 / CBS 101355 / FGSC A1100 / Af293) (Neosartorya fumigata).